The sequence spans 255 residues: MLTTFLLGLTFFTRIPVPGKLNFSEEKFNRAPIFLPAYGLVTGGILALIIELFGRSFPGFFWAGVIIAGQIYLSGALHIDGLLDSLDAIYSNRDREKRLEILKDSRVGSMAVAFFGAFLILKYGSYASFTPKVQAFTVLISEIILRGTGYLVIYSFPYVGSSLGRGFKDNASTAGLIFTLGQTLIFTLGAAAFFNFSLIKILIILLLAYLFAFVVAARWQQFFGGLTGDNYGGIMELTGLFVPVAVLLINNIGVV.

The next 7 membrane-spanning stretches (helical) occupy residues 33–53 (IFLPAYGLVTGGILALIIELF), 57–77 (FPGFFWAGVIIAGQIYLSGAL), 107–127 (VGSMAVAFFGAFLILKYGSYA), 136–156 (FTVLISEIILRGTGYLVIYSF), 174–194 (AGLIFTLGQTLIFTLGAAAFF), 196–216 (FSLIKILIILLLAYLFAFVVA), and 234–254 (IMELTGLFVPVAVLLINNIGV).

The protein belongs to the CobS family. Mg(2+) serves as cofactor.

The protein resides in the cell membrane. The catalysed reaction is alpha-ribazole + adenosylcob(III)inamide-GDP = adenosylcob(III)alamin + GMP + H(+). It carries out the reaction alpha-ribazole 5'-phosphate + adenosylcob(III)inamide-GDP = adenosylcob(III)alamin 5'-phosphate + GMP + H(+). Its pathway is cofactor biosynthesis; adenosylcobalamin biosynthesis; adenosylcobalamin from cob(II)yrinate a,c-diamide: step 7/7. Joins adenosylcobinamide-GDP and alpha-ribazole to generate adenosylcobalamin (Ado-cobalamin). Also synthesizes adenosylcobalamin 5'-phosphate from adenosylcobinamide-GDP and alpha-ribazole 5'-phosphate. The sequence is that of Adenosylcobinamide-GDP ribazoletransferase from Carboxydothermus hydrogenoformans (strain ATCC BAA-161 / DSM 6008 / Z-2901).